Reading from the N-terminus, the 209-residue chain is Thiamine-phosphate synthase 1 (209 aa).

4-amino-2-methyl-5-(diphosphooxymethyl)pyrimidine-binding positions include 39-43 (QFREK) and Asn74. Mg(2+) contacts are provided by Asp75 and Asp94. Ser112 contacts 4-amino-2-methyl-5-(diphosphooxymethyl)pyrimidine. 138–140 (TQS) is a binding site for 2-[(2R,5Z)-2-carboxy-4-methylthiazol-5(2H)-ylidene]ethyl phosphate. A 4-amino-2-methyl-5-(diphosphooxymethyl)pyrimidine-binding site is contributed by Lys141. 2-[(2R,5Z)-2-carboxy-4-methylthiazol-5(2H)-ylidene]ethyl phosphate contacts are provided by residues Gly170 and 190–191 (IS).

Belongs to the thiamine-phosphate synthase family. Mg(2+) is required as a cofactor.

The enzyme catalyses 2-[(2R,5Z)-2-carboxy-4-methylthiazol-5(2H)-ylidene]ethyl phosphate + 4-amino-2-methyl-5-(diphosphooxymethyl)pyrimidine + 2 H(+) = thiamine phosphate + CO2 + diphosphate. The catalysed reaction is 2-(2-carboxy-4-methylthiazol-5-yl)ethyl phosphate + 4-amino-2-methyl-5-(diphosphooxymethyl)pyrimidine + 2 H(+) = thiamine phosphate + CO2 + diphosphate. It carries out the reaction 4-methyl-5-(2-phosphooxyethyl)-thiazole + 4-amino-2-methyl-5-(diphosphooxymethyl)pyrimidine + H(+) = thiamine phosphate + diphosphate. Its pathway is cofactor biosynthesis; thiamine diphosphate biosynthesis; thiamine phosphate from 4-amino-2-methyl-5-diphosphomethylpyrimidine and 4-methyl-5-(2-phosphoethyl)-thiazole: step 1/1. Condenses 4-methyl-5-(beta-hydroxyethyl)thiazole monophosphate (THZ-P) and 2-methyl-4-amino-5-hydroxymethyl pyrimidine pyrophosphate (HMP-PP) to form thiamine monophosphate (TMP). The polypeptide is Thiamine-phosphate synthase 1 (Streptococcus pneumoniae (strain ATCC BAA-255 / R6)).